Consider the following 372-residue polypeptide: MSFFKTAVRRFSSTSITRGMAKAIAYSEYGNPKEVLRAVSYNVPKCSKNQVNVRFLASPINPSDINQIQGVYPSKPPFTNDVCSSKPSAVAGNEGLVEVVDVGDQFKGTFSPGQWAILGSVNLGSWRTEMNIDGRSLVPVDKSAFPSIAEAATLSVNPCTAYCLLQHVVQLNKGDWFIQDGANSMVGIATIQLAKHFGYKSINVVRNRPDIEKLKEQLKSLGATIVITDEELMDRKTMKQKVPEWIQGGEVKLGIDCVSGRVAAEMAKYMSKGATMATFGGMSRQPLPVPVSLLIFKNLKFHGFWVTKWKSEHPEEFLKIIHKVEDFYRNGTLKTVNTELVSLKEDADEKTFLDTFLNAIEGHGKKIIKFEH.

A mitochondrion-targeting transit peptide spans 1 to 18; that stretch reads MSFFKTAVRRFSSTSITR. The Proton donor role is filled by tyrosine 72. Residues asparagine 157, 183–186, 206–208, 279–282, 304–306, and lysine 365 contribute to the NADP(+) site; these read NSMV, RNR, FGGM, and FWV.

This sequence belongs to the zinc-containing alcohol dehydrogenase family. Quinone oxidoreductase subfamily. As to quaternary structure, homodimer.

Its subcellular location is the mitochondrion matrix. The catalysed reaction is a 2,3-saturated acyl-[ACP] + NADP(+) = a (2E)-enoyl-[ACP] + NADPH + H(+). In terms of biological role, catalyzes the NADPH-dependent reduction of trans-2-enoyl thioesters in mitochondrial fatty acid synthesis (fatty acid synthesis type II). Fatty acid chain elongation in mitochondria uses acyl carrier protein (ACP) as an acyl group carrier, but the enzyme accepts both ACP and CoA thioesters as substrates in vitro. Required for respiration and the maintenance of the mitochondrial compartment. In Schizosaccharomyces pombe (strain 972 / ATCC 24843) (Fission yeast), this protein is Enoyl-[acyl-carrier-protein] reductase, mitochondrial (etr1).